The following is a 188-amino-acid chain: MSTPSLLAIGLGNPGAEYEDTRHNVGHQVIDGLSGRLDISLQHQSDALVGWGRYVDQKIGLAVPLTYMNRSGDAVAGLRAHYDLPIDRLLVIVDDLHLPVGTIRLRPTGSSGGHNGLAHVAQRLGTTEFSRLRVGIGNDFPEGRQSDYVLSPFTDEQRPAARSAREDAEDAVLTMARDDIDAAMNRFN.

TRNA is bound at residue Y18. The active-site Proton acceptor is the H23. TRNA-binding residues include Y67, N69, and N115.

It belongs to the PTH family. In terms of assembly, monomer.

It is found in the cytoplasm. It catalyses the reaction an N-acyl-L-alpha-aminoacyl-tRNA + H2O = an N-acyl-L-amino acid + a tRNA + H(+). Functionally, hydrolyzes ribosome-free peptidyl-tRNAs (with 1 or more amino acids incorporated), which drop off the ribosome during protein synthesis, or as a result of ribosome stalling. In terms of biological role, catalyzes the release of premature peptidyl moieties from peptidyl-tRNA molecules trapped in stalled 50S ribosomal subunits, and thus maintains levels of free tRNAs and 50S ribosomes. The sequence is that of Peptidyl-tRNA hydrolase from Salinibacter ruber (strain DSM 13855 / M31).